We begin with the raw amino-acid sequence, 43 residues long: Defensin (43 aa).

Intrachain disulfides connect Cys-3–Cys-34, Cys-20–Cys-39, and Cys-24–Cys-41.

Belongs to the invertebrate defensin family. Type 1 subfamily.

It localises to the secreted. Antibacterial peptide. Affects Gram-positive bacteria M.luteus, B.megaterium, A.viridans, S.aureus and S.saprophyticus. Moderate activity against P.acidilactici and B.subtilis QB935. Also affects Gram-negative bacterium, D22 form of E.coli. The polypeptide is Defensin (Pyrrhocoris apterus (Sap sucking bug)).